Consider the following 86-residue polypeptide: U15-lycotoxin-Ls1d (86 aa).

Residues 1–20 form the signal peptide; it reads MNSKIFAVLLLLALLSCVLS. In terms of domain architecture, WAP spans 21 to 66; sequence DQYCPKSSITACKKMNIRNDCCKDDDCTGGSWCCATPCGNFCKYPT. 5 disulfide bridges follow: Cys-24–Cys-54, Cys-32–Cys-58, Cys-41–Cys-53, Cys-42–Cys-80, and Cys-47–Cys-62.

The protein belongs to the venom protein 11 family. 01 (wap-1) subfamily. In terms of processing, contains 5 disulfide bonds. Expressed by the venom gland.

The protein localises to the secreted. In terms of biological role, has antibacterial activity. This is U15-lycotoxin-Ls1d from Lycosa singoriensis (Wolf spider).